The following is a 303-amino-acid chain: MKITVLGCGALGQLWLTALCKQGHEVQGWLRVPQPYCSVNLVETDGSIFNESLTANDPDFLATSDLLLVTLKAWQVSDAVKSLASTLPVTTPILLIHNGMGTIEELQNIQQPLLMGTTTHAARRDGNVIIHVANGITHIGPARQQDGDYSYLADILQTVLPDVAWHNNIRAELWRKLAVNCVINPLTAIWNCPNGELRHHPQEIMQICEEVAAVIEREGHHTSAEDLRDYVMQVIDATAENISSMLQDIRALRHTEIDYINGFLLRRARAHGIAVPENTRLFEMVKRKESEYERIGTGLPRPW.

NADP(+) contacts are provided by residues 7 to 12 (GCGALG), Asn-98, and Ala-122. Residue Asn-98 coordinates substrate. Lys-176 serves as the catalytic Proton donor. Residues Asn-180, Asn-184, Asn-194, and Ser-244 each coordinate substrate. Residue Glu-256 participates in NADP(+) binding.

The protein belongs to the ketopantoate reductase family. As to quaternary structure, monomer.

It localises to the cytoplasm. The enzyme catalyses (R)-pantoate + NADP(+) = 2-dehydropantoate + NADPH + H(+). It participates in cofactor biosynthesis; (R)-pantothenate biosynthesis; (R)-pantoate from 3-methyl-2-oxobutanoate: step 2/2. Functionally, catalyzes the NADPH-dependent reduction of ketopantoate into pantoic acid. The chain is 2-dehydropantoate 2-reductase (panE) from Shigella flexneri.